A 241-amino-acid polypeptide reads, in one-letter code: MKSLIFVLLLGAVFAEEDKIVGGYECTKHSQAHQVSLNSGYHFCGGSLVSKDWVVSAAHCYKSVLRVRLGEHHIRVNEGTEQYISSSSVIRHPNYSSYNINNDIMLIKLTKPATLNQYVHAVALPTECAADATMCTVSGWGNTMSSVADGDKLQCLSLPILSHADCANSYPGMITQSMFCAGYLEGGKDSCQGDSGGPVVCNGVLQGVVSWGYGCAERDHPGVYAKVCVLSGWVRDTMANY.

The signal sequence occupies residues 1 to 13 (MKSLIFVLLLGAV). Positions 14–19 (FAEEDK) are cleaved as a propeptide — activation peptide. A Peptidase S1 domain is found at 20-239 (IVGGYECTKH…LSGWVRDTMA (220 aa)). 6 disulfide bridges follow: cysteine 26–cysteine 155, cysteine 44–cysteine 60, cysteine 128–cysteine 228, cysteine 135–cysteine 201, cysteine 166–cysteine 180, and cysteine 191–cysteine 215. Active-site charge relay system residues include histidine 59 and aspartate 103. The Charge relay system role is filled by serine 195.

This sequence belongs to the peptidase S1 family.

The protein localises to the secreted. It localises to the extracellular space. The catalysed reaction is Preferential cleavage: Arg-|-Xaa, Lys-|-Xaa.. The polypeptide is Trypsin-1 (Gadus morhua (Atlantic cod)).